The chain runs to 152 residues: UPF0756 membrane protein EF_1246 (152 aa).

4 helical membrane passes run 4-24 (WLFLLLIALIAFVAKNQSLLI), 52-72 (LGVTIISITILVPIATGQIGL), 85-105 (WLGILCGILVAVLSSKGVGLI), and 115-135 (LVFGTILGVVFLKGIAAGPII).

This sequence belongs to the UPF0756 family.

The protein resides in the cell membrane. The sequence is that of UPF0756 membrane protein EF_1246 from Enterococcus faecalis (strain ATCC 700802 / V583).